Consider the following 187-residue polypeptide: UPF0302 protein SERP1032 (187 aa).

The protein belongs to the UPF0302 family.

This is UPF0302 protein SERP1032 from Staphylococcus epidermidis (strain ATCC 35984 / DSM 28319 / BCRC 17069 / CCUG 31568 / BM 3577 / RP62A).